Consider the following 692-residue polypeptide: Elongation factor G (692 aa).

Residues 8–282 (KDTRNIGIMA…AVLDYLPSPL (275 aa)) enclose the tr-type G domain. Residues 17–24 (AHIDAGKT), 81–85 (DTPGH), and 135–138 (NKMD) contribute to the GTP site.

This sequence belongs to the TRAFAC class translation factor GTPase superfamily. Classic translation factor GTPase family. EF-G/EF-2 subfamily.

It localises to the cytoplasm. Its function is as follows. Catalyzes the GTP-dependent ribosomal translocation step during translation elongation. During this step, the ribosome changes from the pre-translocational (PRE) to the post-translocational (POST) state as the newly formed A-site-bound peptidyl-tRNA and P-site-bound deacylated tRNA move to the P and E sites, respectively. Catalyzes the coordinated movement of the two tRNA molecules, the mRNA and conformational changes in the ribosome. This Shouchella clausii (strain KSM-K16) (Alkalihalobacillus clausii) protein is Elongation factor G.